Consider the following 380-residue polypeptide: Chaperone protein DnaJ (380 aa).

Residues 6–71 (DYYAILEVSR…QKRAAYDQYG (66 aa)) form the J domain. A CR-type zinc finger spans residues 136 to 215 (GVKKDVRVIT…CHGEGTVEKE (80 aa)). Zn(2+) is bound by residues Cys149, Cys152, Cys167, Cys170, Cys189, Cys192, Cys203, and Cys206. CXXCXGXG motif repeat units lie at residues 149 to 156 (CEACHGTG), 167 to 174 (CPSCHGAG), 189 to 196 (CPTCHGAG), and 203 to 210 (CKVCHGEG).

The protein belongs to the DnaJ family. In terms of assembly, homodimer. Zn(2+) is required as a cofactor.

It is found in the cytoplasm. Its function is as follows. Participates actively in the response to hyperosmotic and heat shock by preventing the aggregation of stress-denatured proteins and by disaggregating proteins, also in an autonomous, DnaK-independent fashion. Unfolded proteins bind initially to DnaJ; upon interaction with the DnaJ-bound protein, DnaK hydrolyzes its bound ATP, resulting in the formation of a stable complex. GrpE releases ADP from DnaK; ATP binding to DnaK triggers the release of the substrate protein, thus completing the reaction cycle. Several rounds of ATP-dependent interactions between DnaJ, DnaK and GrpE are required for fully efficient folding. Also involved, together with DnaK and GrpE, in the DNA replication of plasmids through activation of initiation proteins. The sequence is that of Chaperone protein DnaJ from Acetobacter pasteurianus (strain NBRC 105184 / IFO 3283-01).